The primary structure comprises 756 residues: Probable chemoreceptor y4sI (756 aa).

2 consecutive transmembrane segments (helical) span residues 26-46 and 330-350; these read VCVA…TSVA and LIKI…MAIL. 2 consecutive HAMP domains span residues 353-406 and 434-486; these read RSIS…ARVA and DEQA…ETIR. The Methyl-accepting transducer domain maps to 491-720; it reads QAASMSSIVS…ESDAACRSLN (230 aa). The interval 736 to 756 is disordered; the sequence is GGGSSTRQPQSPPTQRYFMSR.

Belongs to the methyl-accepting chemotaxis (MCP) protein family.

It is found in the cell membrane. Its function is as follows. Chemotactic-signal transducers respond to changes in the concentration of attractants and repellents in the environment, transduce a signal from the outside to the inside of the cell, and facilitate sensory adaptation through the variation of the level of methylation. Attractants increase the level of methylation while repellents decrease the level of methylation. The polypeptide is Probable chemoreceptor y4sI (Sinorhizobium fredii (strain NBRC 101917 / NGR234)).